Consider the following 368-residue polypeptide: Mitochondrial intermembrane space import and assembly protein 40 (368 aa).

The transit peptide at 1 to 29 (MYRNTMRSASRPVIASLRSSTIRAAPRRF) directs the protein to the mitochondrion. Residues 30–47 (ASTAPADKPRSFKGSLVR) are Mitochondrial matrix-facing. A helical; Signal-anchor for type II membrane protein membrane pass occupies residues 48–65 (LGLAFGAVYYYNTSPIFA). Residues 66 to 368 (DEAISKTVPA…AAKKNAEKKQ (303 aa)) lie on the Mitochondrial intermembrane side of the membrane. Basic and acidic residues predominate over residues 95-104 (RKQIKAKSEE). The disordered stretch occupies residues 95 to 144 (RKQIKAKSEETAASSKTPESQQSNPQTAAADGSPAALEEEAGQQGAFNPE). Positions 105-121 (TAASSKTPESQQSNPQT) are enriched in polar residues. Cystine bridges form between C152–C154, C163–C196, and C173–C186. In terms of domain architecture, CHCH spans 160–204 (DGPCGEEFKTAFSCFVFSQEEPKGMDCIDKFQGMQECFKKYPDIY). 2 consecutive short sequence motifs (cx9C motif) follow at residues 163–173 (CGEEFKTAFSC) and 186–196 (CIDKFQGMQEC). A disordered region spans residues 208-310 (LADDEDGAPT…GSRMVQDVAI (103 aa)). Residues 240–263 (LARETKDKTAADATKFDDSQKPAE) are compositionally biased toward basic and acidic residues. Residues 264-280 (SKTPAKTTSTSTDSAQK) show a composition bias toward low complexity. Over residues 283–295 (VDAHRDAEPKSDA) the composition is skewed to basic and acidic residues.

As to quaternary structure, monomer. It depends on Cu(2+) as a cofactor. Requires Zn(2+) as cofactor.

It localises to the mitochondrion inner membrane. Required for the import and folding of small cysteine-containing proteins (small Tim) in the mitochondrial intermembrane space (IMS). Forms a redox cycle with ERV1 that involves a disulfide relay system. Precursor proteins to be imported into the IMS are translocated in their reduced form into the mitochondria. The oxidized form of MIA40 forms a transient intermolecular disulfide bridge with the reduced precursor protein, resulting in oxidation of the precursor protein that now contains an intramolecular disulfide bond and is able to undergo folding in the IMS. This Gibberella zeae (strain ATCC MYA-4620 / CBS 123657 / FGSC 9075 / NRRL 31084 / PH-1) (Wheat head blight fungus) protein is Mitochondrial intermembrane space import and assembly protein 40 (MIA40).